The following is a 564-amino-acid chain: Sulfite reductase [NADPH] hemoprotein beta-component 2 (564 aa).

Cys426, Cys432, Cys471, and Cys475 together coordinate [4Fe-4S] cluster. Cys475 provides a ligand contact to siroheme.

It belongs to the nitrite and sulfite reductase 4Fe-4S domain family. In terms of assembly, alpha(8)-beta(8). The alpha component is a flavoprotein, the beta component is a hemoprotein. The cofactor is siroheme. Requires [4Fe-4S] cluster as cofactor.

It carries out the reaction hydrogen sulfide + 3 NADP(+) + 3 H2O = sulfite + 3 NADPH + 4 H(+). The protein operates within sulfur metabolism; hydrogen sulfide biosynthesis; hydrogen sulfide from sulfite (NADPH route): step 1/1. Component of the sulfite reductase complex that catalyzes the 6-electron reduction of sulfite to sulfide. This is one of several activities required for the biosynthesis of L-cysteine from sulfate. The protein is Sulfite reductase [NADPH] hemoprotein beta-component 2 of Klebsiella pneumoniae (strain 342).